The chain runs to 85 residues: Large ribosomal subunit protein bL27 (85 aa).

Positions 1-22 (MAHKKGQGSTQNNRDSAGRRLG) are disordered.

This sequence belongs to the bacterial ribosomal protein bL27 family.

The chain is Large ribosomal subunit protein bL27 from Sulfurimonas denitrificans (strain ATCC 33889 / DSM 1251) (Thiomicrospira denitrificans (strain ATCC 33889 / DSM 1251)).